A 322-amino-acid polypeptide reads, in one-letter code: CMP-sialic acid transporter 1 (322 aa).

Residues 1–2 lie on the Cytoplasmic side of the membrane; the sequence is MQ. A helical transmembrane segment spans residues 3–23; that stretch reads WYLVAALLTVLTSSQGILTTL. Residues 24–33 lie on the Lumenal side of the membrane; sequence SQSNGKYKYD. A helical membrane pass occupies residues 34-54; sequence YATIPFLAELFKLSFSSFFLW. The Cytoplasmic segment spans residues 55–75; the sequence is KECQSSSPPRMTKEWRSIRLY. The helical transmembrane segment at 76 to 96 threads the bilayer; it reads LVPSVIYLIHNNVQFATLTYV. At 97-100 the chain is on the lumenal side; that stretch reads DPST. Residues 101–120 traverse the membrane as a helical segment; the sequence is YQIMGNLKIVTTGILFRLVL. Residues 121–126 are Cytoplasmic-facing; sequence KRKLSN. Residues 127 to 144 form a helical membrane-spanning segment; sequence LQWMAVVLLAVGTTTSQV. Over 145 to 157 the chain is Lumenal; it reads KGCGDAPCDSLFS. Residues 158-178 traverse the membrane as a helical segment; it reads APFQGYMLGILSACLSALAGV. The Cytoplasmic segment spans residues 179–198; that stretch reads YTEYLMKKNNDSLYWQNVQL. The helical transmembrane segment at 199-219 threads the bilayer; that stretch reads YTFGVIFNMGWLIYGDFKAGF. The Lumenal portion of the chain corresponds to 220-233; that stretch reads ERGPWWQRLFNGYS. A helical transmembrane segment spans residues 234–254; sequence ITTWMVVFNLGSTGLLVSWLM. Over 255 to 262 the chain is Cytoplasmic; sequence KYSDNIVK. The chain crosses the membrane as a helical span at residues 263–283; the sequence is VYSTSMGMLLTMVLSVYLFNV. At 284–286 the chain is on the lumenal side; it reads RAT.

The protein belongs to the nucleotide-sugar transporter family. CMP-Sialate:CMP antiporter (TC 2.A.7.12) subfamily.

The protein localises to the golgi apparatus membrane. Functionally, sugar transporter involved in the transport of CMP-sialic acid from the cytoplasm into the Golgi. May transport important nucleotide sugars such as CMP-Kdo (2-keto-3-deoxy-D-manno-octulosonic acid) in physiological conditions. The sequence is that of CMP-sialic acid transporter 1 from Oryza sativa subsp. indica (Rice).